The primary structure comprises 153 residues: Ubiquitin-conjugating enzyme E2 13 (153 aa).

The region spanning 3–149 is the UBC core domain; that stretch reads SLPKRIIKET…AREWTKLYAK (147 aa). The active-site Glycyl thioester intermediate is the Cys-87. Residue Lys-92 forms a Glycyl lysine isopeptide (Lys-Gly) (interchain with G-Cter in ubiquitin) linkage.

Belongs to the ubiquitin-conjugating enzyme family. In terms of assembly, heterodimer with MMS2.

It carries out the reaction S-ubiquitinyl-[E1 ubiquitin-activating enzyme]-L-cysteine + [E2 ubiquitin-conjugating enzyme]-L-cysteine = [E1 ubiquitin-activating enzyme]-L-cysteine + S-ubiquitinyl-[E2 ubiquitin-conjugating enzyme]-L-cysteine.. It participates in protein modification; protein ubiquitination. Has a role in the DNA error-free postreplication repair (PRR) pathway. The UBC13/MMS2 heterodimer catalyzes the synthesis of non-canonical poly-ubiquitin chains that are linked through 'Lys-63'. This Saccharomyces cerevisiae (strain ATCC 204508 / S288c) (Baker's yeast) protein is Ubiquitin-conjugating enzyme E2 13 (UBC13).